A 1108-amino-acid chain; its full sequence is DNA-directed RNA polymerase subunit beta (1108 aa).

Belongs to the RNA polymerase beta chain family. In terms of assembly, in plastids the minimal PEP RNA polymerase catalytic core is composed of four subunits: alpha, beta, beta', and beta''. When a (nuclear-encoded) sigma factor is associated with the core the holoenzyme is formed, which can initiate transcription.

It is found in the plastid. The protein resides in the chloroplast. The catalysed reaction is RNA(n) + a ribonucleoside 5'-triphosphate = RNA(n+1) + diphosphate. Functionally, DNA-dependent RNA polymerase catalyzes the transcription of DNA into RNA using the four ribonucleoside triphosphates as substrates. The protein is DNA-directed RNA polymerase subunit beta of Gnetum parvifolium (Small-leaved jointfir).